Reading from the N-terminus, the 280-residue chain is MQRLWAPVTLRRVLLLRSVYLPHSWAMQEPRLAVLSPRYFSCTNAIRAKEAHKTSTEEQEEVPLNPPQSLAGTEGLYKADSEPVPHNKGDIDPLQDKSIGIFQRFKKTFKQYGKVMVPVHIVTSTVWFGSFYYAAMKGVNLVPFLEFIGLPDWIVGILRDSQGGYALTAYAMYKLATPARYTVTMGGTSLSVQYLRKHGYLSTPPPVKEFLQDKMEETRELLTEKMEETKERFSEKMEETKELLSERMEETKERFSETKDKFSEKLQETKDKMSFRKKAD.

Residues 96-208 (DKSIGIFQRF…GYLSTPPPVK (113 aa)) form the DUF1279 domain. Residues 115–135 (VMVPVHIVTSTVWFGSFYYAA) traverse the membrane as a helical segment. Residues 207–274 (VKEFLQDKME…KLQETKDKMS (68 aa)) are a coiled coil. The disordered stretch occupies residues 245-280 (SERMEETKERFSETKDKFSEKLQETKDKMSFRKKAD).

It is found in the membrane. This is an uncharacterized protein from Danio rerio (Zebrafish).